A 741-amino-acid chain; its full sequence is Ribosome-releasing factor 2, mitochondrial (741 aa).

Residues 1–29 (MLKYEFLHGLQKRSHYLRQLSGQFFSRSY) constitute a mitochondrion transit peptide. The 280-residue stretch at 31–310 (SKIRNIGILA…AVNSYLPAPE (280 aa)) folds into the tr-type G domain. Residues 40 to 47 (AHIDAGKT), 104 to 108 (DTPGH), and 158 to 161 (NKMD) each bind GTP.

Belongs to the TRAFAC class translation factor GTPase superfamily. Classic translation factor GTPase family. EF-G/EF-2 subfamily.

It localises to the mitochondrion. Its function is as follows. Mitochondrial GTPase that mediates the disassembly of ribosomes from messenger RNA at the termination of mitochondrial protein biosynthesis. Not involved in the GTP-dependent ribosomal translocation step during translation elongation. This Drosophila ananassae (Fruit fly) protein is Ribosome-releasing factor 2, mitochondrial.